The following is a 242-amino-acid chain: U1 small nuclear ribonucleoprotein C (242 aa).

Residues 3-35 form a Matrin-type; degenerate zinc finger; it reads YLGDYCDVYLTHDSMSVRKAHNSGRNHLRNVVE. The disordered stretch occupies residues 60 to 242; it reads GQASSNPMLQ…SSPGPSQEGK (183 aa). Pro residues-rich tracts occupy residues 90–107, 136–149, 156–183, and 201–213; these read MLPP…PGAP, PPMP…PLPN, PFPP…PPIP, and PVPP…PGAP. Residues 231–242 show a composition bias toward polar residues; sequence PASSPGPSQEGK.

This sequence belongs to the U1 small nuclear ribonucleoprotein C family. In terms of assembly, U1 snRNP is composed of the 7 core Sm proteins B/B', D1, D2, D3, E, F and G that assemble in a heptameric protein ring on the Sm site of the small nuclear RNA to form the core snRNP, and at least 3 U1 snRNP-specific proteins U1-70K, U1-A and U1-C. U1-C interacts with U1 snRNA and the 5' splice-site region of the pre-mRNA.

Its subcellular location is the nucleus. In terms of biological role, component of the spliceosomal U1 snRNP, which is essential for recognition of the pre-mRNA 5' splice-site and the subsequent assembly of the spliceosome. U1-C is directly involved in initial 5' splice-site recognition for both constitutive and regulated alternative splicing. The interaction with the 5' splice-site seems to precede base-pairing between the pre-mRNA and the U1 snRNA. Stimulates commitment or early (E) complex formation by stabilizing the base pairing of the 5' end of the U1 snRNA and the 5' splice-site region. This Ajellomyces capsulatus (strain G186AR / H82 / ATCC MYA-2454 / RMSCC 2432) (Darling's disease fungus) protein is U1 small nuclear ribonucleoprotein C.